Consider the following 194-residue polypeptide: Ras-related protein Rab-22A (194 aa).

Residue 12 to 20 coordinates GTP; sequence GDTGVGKSS. The Effector region motif lies at 34 to 42; that stretch reads INPTIGASF. GTP is bound by residues 60 to 64, 118 to 121, and 148 to 150; these read DTAGQ, NKCD, and SAK. The segment at 170 to 194 is disordered; the sequence is DANPASGGKGFKLRRQPSEPKRSCC. Positions 185–194 are enriched in basic and acidic residues; that stretch reads QPSEPKRSCC. 2 S-geranylgeranyl cysteine lipidation sites follow: Cys193 and Cys194.

The protein belongs to the small GTPase superfamily. Rab family. As to quaternary structure, binds EEA1. Interacts (in its GTP-bound form) with RINL. Interacts directly with ZFYVE20. Interacts (in its GTP-bound form) with RABGEF1. As to expression, detected in brain and heart, and at lower levels in lung and spleen.

It localises to the endosome membrane. The protein localises to the cell membrane. It is found in the early endosome. Its subcellular location is the late endosome. The protein resides in the cell projection. It localises to the ruffle. The protein localises to the cytoplasmic vesicle. It is found in the phagosome. Its subcellular location is the phagosome membrane. Functionally, plays a role in endocytosis and intracellular protein transport. Mediates trafficking of TF from early endosomes to recycling endosomes. Required for NGF-mediated endocytosis of NTRK1, and subsequent neurite outgrowth. Binds GTP and GDP and has low GTPase activity. Alternates between a GTP-bound active form and a GDP-bound inactive form. The protein is Ras-related protein Rab-22A (Rab22a) of Mus musculus (Mouse).